A 494-amino-acid chain; its full sequence is Tripartite motif-containing protein 5 (494 aa).

Residue alanine 2 is modified to N-acetylalanine. The segment at 15 to 59 (CPICLELLTEPLSLDCGHSFCQACITANHKKSMLHQGERSCPLCR) adopts an RING-type zinc-finger fold. Residue serine 86 is modified to Phosphoserine. The B box-type zinc finger occupies 91–132 (QKVDHCARHGEKLLLFCQQDGNVICWLCERSQEHRGHHTLLV). The Zn(2+) site is built by cysteine 96, histidine 99, cysteine 118, and histidine 124. Residues 132-222 (VEEVAQTYRE…KRLTQSENDM (91 aa)) are a coiled coil. The segment at 186 to 199 (FKQLRDILDCEESN) is required for interaction with GABARAP and for autophagy. Positions 280-494 (PDLKGMLQVF…LPMTLCSPRS (215 aa)) constitute a B30.2/SPRY domain.

Belongs to the TRIM/RBCC family. In terms of assembly, can form homodimers and homotrimers. In addition to lower-order dimerization, also exhibits a higher-order multimerization and both low- and high-order multimerizations are essential for its restriction activity. Interacts with BTBD1 and BTBD2. Interacts with PSMC4, PSMC5, PSMD7 and HSPA8/HSC70. Interacts (via B30.2/SPRY domain) with HSPA1A/B. Interacts with PSMC2, MAP3K7/TAK1, TAB2 and TAB3. Interacts with SQSTM1. Interacts with TRIM6 and TRIM34. Interacts with ULK1 (phosphorylated form), GABARAP, GABARAPL1, GABARAPL2, MAP1LC3A, MAP1LC3C and BECN1. Degraded in a proteasome-independent fashion in the absence of viral infection but in a proteasome-dependent fashion following exposure to restriction sensitive virus. Post-translationally, autoubiquitinated in a RING finger- and UBE2D2-dependent manner. Monoubiquitinated by TRIM21. Deubiquitinated by Yersinia YopJ. Ubiquitination may not lead to proteasomal degradation.

The protein localises to the cytoplasm. It localises to the nucleus. The enzyme catalyses S-ubiquitinyl-[E2 ubiquitin-conjugating enzyme]-L-cysteine + [acceptor protein]-L-lysine = [E2 ubiquitin-conjugating enzyme]-L-cysteine + N(6)-ubiquitinyl-[acceptor protein]-L-lysine.. The protein operates within protein modification; protein ubiquitination. In terms of biological role, capsid-specific restriction factor that prevents infection from non-host-adapted retroviruses. Blocks viral replication early in the life cycle, after viral entry but before reverse transcription. In addition to acting as a capsid-specific restriction factor, also acts as a pattern recognition receptor that activates innate immune signaling in response to the retroviral capsid lattice. Binding to the viral capsid triggers its E3 ubiquitin ligase activity, and in concert with the heterodimeric ubiquitin conjugating enzyme complex UBE2V1-UBE2N (also known as UBC13-UEV1A complex) generates 'Lys-63'-linked polyubiquitin chains, which in turn are catalysts in the autophosphorylation of the MAP3K7/TAK1 complex (includes TAK1, TAB2, and TAB3). Activation of the MAP3K7/TAK1 complex by autophosphorylation results in the induction and expression of NF-kappa-B and MAPK-responsive inflammatory genes, thereby leading to an innate immune response in the infected cell. Plays a role in regulating autophagy through activation of autophagy regulator BECN1 by causing its dissociation from its inhibitors BCL2 and TAB2. The protein is Tripartite motif-containing protein 5 (TRIM5) of Pithecia pithecia (White-faced saki).